We begin with the raw amino-acid sequence, 370 residues long: Protein-glutamate methylesterase/protein-glutamine glutaminase 3 (370 aa).

The region spanning Lys3–Glu119 is the Response regulatory domain. Residue Asp53 is modified to 4-aspartylphosphate. Residues Ser166–Thr360 form the CheB-type methylesterase domain. Residues Ser178, His205, and Asp302 contribute to the active site.

The protein belongs to the CheB family. Phosphorylated by CheA. Phosphorylation of the N-terminal regulatory domain activates the methylesterase activity.

It localises to the cytoplasm. It catalyses the reaction [protein]-L-glutamate 5-O-methyl ester + H2O = L-glutamyl-[protein] + methanol + H(+). The enzyme catalyses L-glutaminyl-[protein] + H2O = L-glutamyl-[protein] + NH4(+). Functionally, involved in chemotaxis. Part of a chemotaxis signal transduction system that modulates chemotaxis in response to various stimuli. Catalyzes the demethylation of specific methylglutamate residues introduced into the chemoreceptors (methyl-accepting chemotaxis proteins or MCP) by CheR. Also mediates the irreversible deamidation of specific glutamine residues to glutamic acid. This Rhodospirillum rubrum (strain ATCC 11170 / ATH 1.1.1 / DSM 467 / LMG 4362 / NCIMB 8255 / S1) protein is Protein-glutamate methylesterase/protein-glutamine glutaminase 3.